We begin with the raw amino-acid sequence, 61 residues long: Fasciculin-2 (61 aa).

Intrachain disulfides connect C3/C22, C17/C39, C41/C52, and C53/C59.

This sequence belongs to the three-finger toxin family. Short-chain subfamily. Acn-esterase inhibitor sub-subfamily. In terms of tissue distribution, expressed by the venom gland.

It is found in the secreted. In terms of biological role, interferes with neuromuscular transmission by inhibiting the enzyme acetylcholinesterase (AChE) present at the neuromuscular junction. It selectively binds and inhibits with a 1:1 stoichiometry the mammalian and electric fish AChE at picomolar concentrations. It is highly specific for the peripheral site of AChE and blocks the entry of acetylcholine into the active site of the enzyme (through the Met-33 residue), thereby preventing its breakdown. It has been called fasciculin since after injection into mice it causes severe, generalized and long-lasting (5-7 hours) fasciculations. The chain is Fasciculin-2 from Dendroaspis angusticeps (Eastern green mamba).